Reading from the N-terminus, the 370-residue chain is MDLLKSPLYSKYIESNAKLINFAGWEMPISFSGLINEHESVRTSAGFFDISHMGVISLRGINPKEYIQKFFPTNLYSFSEGQGLYTLILNEKGGIIDDLIIYDLGRQEGDISEIFLIVNASRYQDDFLWIKNNLNTNQVSVSNAKTDKVLLSIQGRNSFTLFEEWIGSSISHIPYFGCEYKNFDHISTEGKFFFSKTGYTGENGLEILLPAQSAINLWDFLVSRNIQPCGLGARDTLRLEAGMHLYGQDLDEKTTPYEAGLGWLVNLENNHEFFGRDFLEKQSKLGIKKKLVGLTIEGRAIGRKGCEVFKDEKYIGIITSGTWSPTTEKAIAFAYIQNSYAALNNVVEVLIRGKKFKATITKRAFYKKDI.

Belongs to the GcvT family. In terms of assembly, the glycine cleavage system is composed of four proteins: P, T, L and H.

The catalysed reaction is N(6)-[(R)-S(8)-aminomethyldihydrolipoyl]-L-lysyl-[protein] + (6S)-5,6,7,8-tetrahydrofolate = N(6)-[(R)-dihydrolipoyl]-L-lysyl-[protein] + (6R)-5,10-methylene-5,6,7,8-tetrahydrofolate + NH4(+). Functionally, the glycine cleavage system catalyzes the degradation of glycine. The sequence is that of Aminomethyltransferase from Prochlorococcus marinus (strain MIT 9515).